The chain runs to 82 residues: RNA-binding protein Hfq (82 aa).

The 61-residue stretch at 10-70 (DIFLNGARKN…LSTITPSKAI (61 aa)) folds into the Sm domain.

The protein belongs to the Hfq family. Homohexamer.

In terms of biological role, RNA chaperone that binds small regulatory RNA (sRNAs) and mRNAs to facilitate mRNA translational regulation in response to envelope stress, environmental stress and changes in metabolite concentrations. Also binds with high specificity to tRNAs. The chain is RNA-binding protein Hfq from Clostridium kluyveri (strain NBRC 12016).